A 326-amino-acid polypeptide reads, in one-letter code: Alkanal monooxygenase beta chain (326 aa).

It belongs to the bacterial luciferase oxidoreductase family. Heterodimer of an alpha and a beta chain.

It catalyses the reaction a long-chain fatty aldehyde + FMNH2 + O2 = a long-chain fatty acid + hnu + FMN + H2O + 2 H(+). Functionally, light-emitting reaction in luminous bacteria. The specific role of the beta subunit is unknown, but it is absolutely required for bioluminescence activity. In Aliivibrio fischeri (Vibrio fischeri), this protein is Alkanal monooxygenase beta chain (luxB).